The primary structure comprises 290 residues: Homeobox protein EMX1 (290 aa).

The segment at residues 192-251 (PKRIRTAFSPSQLLRLERAFEKNHYVVGAERKQLAGSLSLSETQVKVWFQNRRTKYKRQK) is a DNA-binding region (homeobox). The disordered stretch occupies residues 249–290 (RQKLEEEGPESEQKKKGSHHINRWRIATKQANGEDIDVTSND). A compositionally biased stretch (basic and acidic residues) spans 250–263 (QKLEEEGPESEQKK).

It belongs to the EMX homeobox family. In terms of assembly, interacts with WRD11 (via the N-terminal and the central portion of the protein); the interaction associates EMX1 with GLI3. In terms of tissue distribution, cerebral cortex.

The protein resides in the nucleus. The protein localises to the cytoplasm. In terms of biological role, transcription factor, which in cooperation with EMX2, acts to generate the boundary between the roof and archipallium in the developing brain. May function in combinations with OTX1/2 to specify cell fates in the developing central nervous system. In Homo sapiens (Human), this protein is Homeobox protein EMX1.